Reading from the N-terminus, the 1403-residue chain is DNA-directed RNA polymerase subunit beta' (1403 aa).

Positions 70, 72, 85, and 88 each coordinate Zn(2+). The Mg(2+) site is built by Asp-461, Asp-463, and Asp-465. Residues Cys-816, Cys-890, Cys-897, and Cys-900 each coordinate Zn(2+).

It belongs to the RNA polymerase beta' chain family. In terms of assembly, the RNAP catalytic core consists of 2 alpha, 1 beta, 1 beta' and 1 omega subunit. When a sigma factor is associated with the core the holoenzyme is formed, which can initiate transcription. Requires Mg(2+) as cofactor. Zn(2+) is required as a cofactor.

It carries out the reaction RNA(n) + a ribonucleoside 5'-triphosphate = RNA(n+1) + diphosphate. In terms of biological role, DNA-dependent RNA polymerase catalyzes the transcription of DNA into RNA using the four ribonucleoside triphosphates as substrates. The sequence is that of DNA-directed RNA polymerase subunit beta' from Dechloromonas aromatica (strain RCB).